The primary structure comprises 92 residues: Enhancer of yellow 2 transcription factor (92 aa).

This sequence belongs to the ENY2 family. Component of the nuclear pore complex (NPC)-associated TREX-2 complex (transcription and export complex 2). Component of the SAGA transcription coactivator-HAT complex. Within the SAGA complex, participates in a subcomplex of SAGA called the DUB module (deubiquitination module).

The protein localises to the nucleus. It is found in the nucleoplasm. In terms of biological role, involved in mRNA export coupled transcription activation by association with both the TREX-2 and the SAGA complexes. The transcription regulatory histone acetylation (HAT) complex SAGA is a multiprotein complex that activates transcription by remodeling chromatin and mediating histone acetylation and deubiquitination. Within the SAGA complex, participates in a subcomplex that specifically deubiquitinates histones. The SAGA complex is recruited to specific gene promoters by activators, where it is required for transcription. The TREX-2 complex functions in docking export-competent ribonucleoprotein particles (mRNPs) to the nuclear entrance of the nuclear pore complex (nuclear basket). TREX-2 participates in mRNA export and accurate chromatin positioning in the nucleus by tethering genes to the nuclear periphery. The sequence is that of Enhancer of yellow 2 transcription factor from Aedes aegypti (Yellowfever mosquito).